The following is a 398-amino-acid chain: Ribosomal RNA large subunit methyltransferase I (398 aa).

Residues 2–79 (SVRLVLAKGR…LSESIDIAFF (78 aa)) form the PUA domain.

The protein belongs to the methyltransferase superfamily. RlmI family.

The protein resides in the cytoplasm. The catalysed reaction is cytidine(1962) in 23S rRNA + S-adenosyl-L-methionine = 5-methylcytidine(1962) in 23S rRNA + S-adenosyl-L-homocysteine + H(+). In terms of biological role, specifically methylates the cytosine at position 1962 (m5C1962) of 23S rRNA. In Shigella dysenteriae serotype 1 (strain Sd197), this protein is Ribosomal RNA large subunit methyltransferase I.